The primary structure comprises 752 residues: Protein ORF24 (752 aa).

This sequence belongs to the herpesviridae UL87 family. As to quaternary structure, interacts with ORF34.

Its function is as follows. Plays a role in the expression of late viral mRNAs together with ORF34. In Homo sapiens (Human), this protein is Protein ORF24 (ORF24).